The sequence spans 252 residues: Endonuclease NucS (252 aa).

Belongs to the NucS endonuclease family.

It is found in the cytoplasm. Its function is as follows. Cleaves both 3' and 5' ssDNA extremities of branched DNA structures. The chain is Endonuclease NucS from Thermococcus kodakarensis (strain ATCC BAA-918 / JCM 12380 / KOD1) (Pyrococcus kodakaraensis (strain KOD1)).